We begin with the raw amino-acid sequence, 285 residues long: Tetraspanin-3 (285 aa).

At 1 to 6 (MRTSNH) the chain is on the cytoplasmic side. Residues 7 to 27 (LIGLVNFLTFLLSIPILGGGI) traverse the membrane as a helical segment. The Extracellular segment spans residues 28–43 (WLSSRANSTDCLRFLQ). N-linked (GlcNAc...) asparagine glycosylation occurs at Asn-34. A helical membrane pass occupies residues 44–64 (WPLIVIGISIMVVSLAGFAGA). The Cytoplasmic segment spans residues 65–71 (CYRNKFL). The chain crosses the membrane as a helical span at residues 72–92 (MWLYLVVMLLIIAALIGFIIF). Residues 93–235 (AYAVTDKGSG…LGSLKKSWRK (143 aa)) are Extracellular-facing. N-linked (GlcNAc...) asparagine glycosylation is present at Asn-187. A helical membrane pass occupies residues 236–256 (VSVINIVVLIILVIFYVIAYA). Residues 257-285 (AYRNVKRIDNDEPAGEARMTKSHPSHFHL) lie on the Cytoplasmic side of the membrane.

Belongs to the tetraspanin (TM4SF) family.

The protein localises to the cell membrane. In terms of biological role, may be involved in the regulation of cell differentiation. This is Tetraspanin-3 (TET3) from Arabidopsis thaliana (Mouse-ear cress).